Consider the following 310-residue polypeptide: Glutarate 2-hydroxylase (310 aa).

3 residues coordinate Fe cation: His-160, Asp-162, and His-277.

Belongs to the glutarate hydroxylase family. As to quaternary structure, homotetramer. Fe(2+) is required as a cofactor.

The enzyme catalyses glutarate + 2-oxoglutarate + O2 = (S)-2-hydroxyglutarate + succinate + CO2. It participates in amino-acid degradation. Acts as an alpha-ketoglutarate-dependent dioxygenase catalyzing hydroxylation of glutarate (GA) to L-2-hydroxyglutarate (L2HG). Functions in a L-lysine degradation pathway that proceeds via cadaverine, glutarate and L-2-hydroxyglutarate. The chain is Glutarate 2-hydroxylase from Shigella flexneri.